Here is a 676-residue protein sequence, read N- to C-terminus: DNA-directed RNA polymerase subunit beta' (676 aa).

Zn(2+) contacts are provided by Cys-69, Cys-71, Cys-87, and Cys-90. Mg(2+) is bound by residues Asp-485, Asp-487, and Asp-489.

It belongs to the RNA polymerase beta' chain family. RpoC1 subfamily. As to quaternary structure, in plastids the minimal PEP RNA polymerase catalytic core is composed of four subunits: alpha, beta, beta', and beta''. When a (nuclear-encoded) sigma factor is associated with the core the holoenzyme is formed, which can initiate transcription. It depends on Mg(2+) as a cofactor. Zn(2+) is required as a cofactor.

It localises to the plastid. The protein localises to the chloroplast. The catalysed reaction is RNA(n) + a ribonucleoside 5'-triphosphate = RNA(n+1) + diphosphate. DNA-dependent RNA polymerase catalyzes the transcription of DNA into RNA using the four ribonucleoside triphosphates as substrates. The chain is DNA-directed RNA polymerase subunit beta' from Fagopyrum esculentum subsp. ancestrale (Wild buckwheat).